The primary structure comprises 585 residues: YTH domain-containing family protein 3 (585 aa).

Disordered regions lie at residues 1-52 (MSAT…YPPM), 243-277 (RKPAKPQPKLKPKGNVGIGGSAVPPPPIKHNMNIG), and 304-351 (PQPL…QQLQ). Position 2 is an N-acetylserine (Ser2). A compositionally biased stretch (polar residues) spans 15-24 (NKVSVQNGSI). Phosphoserine is present on Ser23. The segment covering 244-254 (KPAKPQPKLKP) has biased composition (basic residues). The span at 329 to 351 (QQQQGPQPQAQPHQVQPQQQQLQ) shows a compositional bias: low complexity. Residues 416–550 (GRVFIIKSYS…EKAKQVLKII (135 aa)) form the YTH domain. Residues 422–424 (KSY), Asp428, 438–439 (WC), Asn468, Trp492, and Trp497 each bind RNA.

The protein belongs to the YTHDF family. YTHDF3 subfamily. In terms of assembly, interacts with CNOT1; promoting recruitment of the CCR4-NOT complex. Interacts with YTHDF1. Interacts with YTHDF2. Interacts with PAN3. (Microbial infection) Proteolytically cleaved by HIV-1 protease when incorporated into HIV-1 particles in a nucleocapsid-dependent-manner. Cleavage by HIV-1 protease probably ensures optimal infectivity of the mature virion.

The protein localises to the cytoplasm. The protein resides in the cytosol. It is found in the P-body. It localises to the stress granule. Its function is as follows. Specifically recognizes and binds N6-methyladenosine (m6A)-containing RNAs, and regulates their stability. M6A is a modification present at internal sites of mRNAs and some non-coding RNAs and plays a role in mRNA stability and processing. Acts as a regulator of mRNA stability by promoting degradation of m6A-containing mRNAs via interaction with the CCR4-NOT complex or PAN3. The YTHDF paralogs (YTHDF1, YTHDF2 and YTHDF3) share m6A-containing mRNAs targets and act redundantly to mediate mRNA degradation and cellular differentiation. Acts as a negative regulator of type I interferon response by down-regulating interferon-stimulated genes (ISGs) expression: acts by binding to FOXO3 mRNAs. Binds to FOXO3 mRNAs independently of METTL3-mediated m6A modification. Can also act as a regulator of mRNA stability in cooperation with YTHDF2 by binding to m6A-containing mRNA and promoting their degradation. Recognizes and binds m6A-containing circular RNAs (circRNAs); circRNAs are generated through back-splicing of pre-mRNAs, a non-canonical splicing process promoted by dsRNA structures across circularizing exons. Promotes formation of phase-separated membraneless compartments, such as P-bodies or stress granules, by undergoing liquid-liquid phase separation upon binding to mRNAs containing multiple m6A-modified residues: polymethylated mRNAs act as a multivalent scaffold for the binding of YTHDF proteins, juxtaposing their disordered regions and thereby leading to phase separation. The resulting mRNA-YTHDF complexes then partition into different endogenous phase-separated membraneless compartments, such as P-bodies, stress granules or neuronal RNA granules. May also recognize and bind N1-methyladenosine (m1A)-containing mRNAs: inhibits trophoblast invasion by binding to m1A-methylated transcripts of IGF1R, promoting their degradation. In terms of biological role, has some antiviral activity against HIV-1 virus: incorporated into HIV-1 particles in a nucleocapsid-dependent manner and reduces viral infectivity in the next cycle of infection. May interfere with this early step of the viral life cycle by binding to N6-methyladenosine (m6A) modified sites on the HIV-1 RNA genome. The chain is YTH domain-containing family protein 3 from Homo sapiens (Human).